The chain runs to 537 residues: Light-independent protochlorophyllide reductase subunit B (537 aa).

Asp-36 is a binding site for [4Fe-4S] cluster. The active-site Proton donor is Asp-292. Gly-428–Leu-429 contacts substrate. Positions Thr-459–Gly-483 are disordered.

The protein belongs to the ChlB/BchB/BchZ family. In terms of assembly, protochlorophyllide reductase is composed of three subunits; BchL, BchN and BchB. Forms a heterotetramer of two BchB and two BchN subunits. Requires [4Fe-4S] cluster as cofactor.

The enzyme catalyses chlorophyllide a + oxidized 2[4Fe-4S]-[ferredoxin] + 2 ADP + 2 phosphate = protochlorophyllide a + reduced 2[4Fe-4S]-[ferredoxin] + 2 ATP + 2 H2O. The protein operates within porphyrin-containing compound metabolism; bacteriochlorophyll biosynthesis (light-independent). In terms of biological role, component of the dark-operative protochlorophyllide reductase (DPOR) that uses Mg-ATP and reduced ferredoxin to reduce ring D of protochlorophyllide (Pchlide) to form chlorophyllide a (Chlide). This reaction is light-independent. The NB-protein (BchN-BchB) is the catalytic component of the complex. This chain is Light-independent protochlorophyllide reductase subunit B, found in Chloroherpeton thalassium (strain ATCC 35110 / GB-78).